Consider the following 185-residue polypeptide: Probable RNA 2'-phosphotransferase (185 aa).

This sequence belongs to the KptA/TPT1 family.

In terms of biological role, removes the 2'-phosphate from RNA via an intermediate in which the phosphate is ADP-ribosylated by NAD followed by a presumed transesterification to release the RNA and generate ADP-ribose 1''-2''-cyclic phosphate (APPR&gt;P). May function as an ADP-ribosylase. This is Probable RNA 2'-phosphotransferase from Bacillus thuringiensis subsp. konkukian (strain 97-27).